A 404-amino-acid polypeptide reads, in one-letter code: MKLPIYLDYAATCPVDERVAEKMMNYLTIDGVFGNPASRSHKFGWQAEEAVDIARNQIADLIGADSREIVFTSGATESDNLAIKGAAHFYQTKGKHIITCKTEHKAVLDTCRQLEREGFEVTYLSPKCDGLIDLDEFKAAIRPDTILASIMHVNNEIGVIQDIRAIGEICRAHKIIFHVDATQSVGKIAINLAELSVDLLSMSGHKLYGPKGVGALYVRRKPRIRLEAIIHGGGHERGMRSGTLPVHQIVGMGEAYRICKEEMATEMPRLKALRDRLYNGLKDIEETYVNGSMEHRVDSNLNISFNYVEGESLMMALRDIAVSSGSACTSASLEPSYVLRALGLNDELAHSSIRFTVGRYTTEEEIDYTIELVKSAVKKLRELSPLWDMFKEGVDMSKIEWSAH.

Residues 75–76 (AT), Asn-155, Gln-183, and 203–205 (SGH) each bind pyridoxal 5'-phosphate. An N6-(pyridoxal phosphate)lysine modification is found at Lys-206. Thr-243 is a binding site for pyridoxal 5'-phosphate. Cys-328 acts as the Cysteine persulfide intermediate in catalysis. Cys-328 contributes to the [2Fe-2S] cluster binding site.

Belongs to the class-V pyridoxal-phosphate-dependent aminotransferase family. NifS/IscS subfamily. Homodimer. Forms a heterotetramer with IscU, interacts with other sulfur acceptors. Pyridoxal 5'-phosphate serves as cofactor.

It is found in the cytoplasm. It catalyses the reaction (sulfur carrier)-H + L-cysteine = (sulfur carrier)-SH + L-alanine. It participates in cofactor biosynthesis; iron-sulfur cluster biosynthesis. Its function is as follows. Master enzyme that delivers sulfur to a number of partners involved in Fe-S cluster assembly, tRNA modification or cofactor biosynthesis. Catalyzes the removal of elemental sulfur atoms from cysteine to produce alanine. Functions as a sulfur delivery protein for Fe-S cluster synthesis onto IscU, an Fe-S scaffold assembly protein, as well as other S acceptor proteins. The polypeptide is Cysteine desulfurase IscS (Actinobacillus succinogenes (strain ATCC 55618 / DSM 22257 / CCUG 43843 / 130Z)).